The chain runs to 143 residues: Mediator of RNA polymerase II transcription subunit 9 (143 aa).

Residues glutamine 84 to threonine 141 are a coiled coil.

Belongs to the Mediator complex subunit 9 family. In terms of assembly, component of the Mediator complex.

The protein resides in the nucleus. Functionally, component of the Mediator complex, a coactivator involved in the regulated transcription of nearly all RNA polymerase II-dependent genes. Mediator functions as a bridge to convey information from gene-specific regulatory proteins to the basal RNA polymerase II transcription machinery. Mediator is recruited to promoters by direct interactions with regulatory proteins and serves as a scaffold for the assembly of a functional preinitiation complex with RNA polymerase II and the general transcription factors. The polypeptide is Mediator of RNA polymerase II transcription subunit 9 (MED9) (Drosophila pseudoobscura pseudoobscura (Fruit fly)).